The primary structure comprises 489 residues: Blue-light-activated histidine kinase (489 aa).

Residues 19 to 93 (ATDPFRAAVE…AIKSAIAAEK (75 aa)) enclose the PAS domain. Cys-69 bears the S-4a-FMN cysteine mark. 2 PAC domains span residues 93-147 (KPID…ELEK) and 232-281 (YSIE…NKAL). The HWE histidine kinase domain stretch occupies residues 259-341 (NPLVLGIVQD…LLKENWAGAT (83 aa)). Phosphohistidine; by autocatalysis is present on His-288.

In terms of processing, FMN binds covalently to cysteine after exposure to blue light and this bond is spontaneously broken in the dark.

It carries out the reaction ATP + protein L-histidine = ADP + protein N-phospho-L-histidine.. In terms of biological role, photosensitive kinase that is involved in increased bacterial virulence upon exposure to light. Once ejected from an infected animal host, sunlight acts as an environmental signal that increases the virulence of the bacterium, preparing it for infection of the next host. This photoreceptor protein is directly related to the bacterium's survival and replication within host macrophages. This Brucella ovis (strain ATCC 25840 / 63/290 / NCTC 10512) protein is Blue-light-activated histidine kinase.